The following is a 512-amino-acid chain: 2,3-bisphosphoglycerate-independent phosphoglycerate mutase (512 aa).

The Mn(2+) site is built by Asp-18 and Ser-68. Ser-68 (phosphoserine intermediate) is an active-site residue. Substrate is bound by residues His-129, Arg-159–Asp-160, Arg-191, Arg-197, Arg-265–Arg-268, and Lys-338. 5 residues coordinate Mn(2+): Asp-403, His-407, Asp-444, His-445, and His-462.

The protein belongs to the BPG-independent phosphoglycerate mutase family. In terms of assembly, monomer. Requires Mn(2+) as cofactor.

It catalyses the reaction (2R)-2-phosphoglycerate = (2R)-3-phosphoglycerate. It functions in the pathway carbohydrate degradation; glycolysis; pyruvate from D-glyceraldehyde 3-phosphate: step 3/5. Catalyzes the interconversion of 2-phosphoglycerate and 3-phosphoglycerate. The protein is 2,3-bisphosphoglycerate-independent phosphoglycerate mutase of Mesomycoplasma hyopneumoniae (strain 232) (Mycoplasma hyopneumoniae).